A 497-amino-acid polypeptide reads, in one-letter code: Probable cytosol aminopeptidase (497 aa).

2 residues coordinate Mn(2+): Lys-263 and Asp-268. Lys-275 is a catalytic residue. Residues Asp-286, Asp-345, and Glu-347 each coordinate Mn(2+). Arg-349 is an active-site residue.

This sequence belongs to the peptidase M17 family. Requires Mn(2+) as cofactor.

It localises to the cytoplasm. It catalyses the reaction Release of an N-terminal amino acid, Xaa-|-Yaa-, in which Xaa is preferably Leu, but may be other amino acids including Pro although not Arg or Lys, and Yaa may be Pro. Amino acid amides and methyl esters are also readily hydrolyzed, but rates on arylamides are exceedingly low.. It carries out the reaction Release of an N-terminal amino acid, preferentially leucine, but not glutamic or aspartic acids.. Presumably involved in the processing and regular turnover of intracellular proteins. Catalyzes the removal of unsubstituted N-terminal amino acids from various peptides. The chain is Probable cytosol aminopeptidase from Brucella suis biovar 1 (strain 1330).